Consider the following 79-residue polypeptide: Putative membrane protein insertion efficiency factor (79 aa).

Belongs to the UPF0161 family.

The protein resides in the cell inner membrane. Functionally, could be involved in insertion of integral membrane proteins into the membrane. The chain is Putative membrane protein insertion efficiency factor from Prochlorococcus marinus (strain SARG / CCMP1375 / SS120).